The following is a 257-amino-acid chain: uncharacterized protein (257 aa).

Residues 6–26 (IFWLNLAAIIIISIVVSGDMF) form a helical membrane-spanning segment.

It belongs to the staphylococcal tandem lipoprotein family.

The protein resides in the cell membrane. This is an uncharacterized protein from Staphylococcus aureus (strain COL).